The following is a 245-amino-acid chain: Adenosine 5'-phosphosulfate reductase (245 aa).

Residues C124, C125, C205, and C208 each contribute to the [4Fe-4S] cluster site. C231 acts as the Nucleophile; cysteine thiosulfonate intermediate in catalysis.

This sequence belongs to the PAPS reductase family. CysH subfamily. [4Fe-4S] cluster is required as a cofactor.

Its subcellular location is the cytoplasm. The catalysed reaction is [thioredoxin]-disulfide + sulfite + AMP + 2 H(+) = adenosine 5'-phosphosulfate + [thioredoxin]-dithiol. The protein operates within sulfur metabolism; hydrogen sulfide biosynthesis; sulfite from sulfate. Its function is as follows. Catalyzes the formation of sulfite from adenosine 5'-phosphosulfate (APS) using thioredoxin as an electron donor. In Chelativorans sp. (strain BNC1), this protein is Adenosine 5'-phosphosulfate reductase.